Reading from the N-terminus, the 460-residue chain is NADH-ubiquinone oxidoreductase chain 4 (460 aa).

13 helical membrane-spanning segments follow: residues 20-42, 61-81, 94-113, 117-139, 148-168, 195-215, 225-245, 258-278, 285-304, 308-330, 351-371, 394-414, and 436-456; these read AKWLWTTSIAQSLVIALASLSWL, PLSTPLLVLTCWLLPLMVLAS, RTYISLLVSLQMFLILAFGA, IMFYIMFEATLLPTLIIITRWGN, TYFLFYTLAGSLPLLVALLLL, LWWAACLLAFLVKMPVYGVHL, PIAGSMILAAVLLKLGGYGMM, LAYPFIVLALWGIIMTGSICL, SLIAYSSVGHMGLVAGGILI, WGFTGAIILMIAHGLASSALFCL, MILPLMTTWWFVASLANLALP, LLLTGLGTLITASYSLYLFLM, and LLITLHLIPIILLILKPELMW.

This sequence belongs to the complex I subunit 4 family.

The protein localises to the mitochondrion membrane. It carries out the reaction a ubiquinone + NADH + 5 H(+)(in) = a ubiquinol + NAD(+) + 4 H(+)(out). In terms of biological role, core subunit of the mitochondrial membrane respiratory chain NADH dehydrogenase (Complex I) that is believed to belong to the minimal assembly required for catalysis. Complex I functions in the transfer of electrons from NADH to the respiratory chain. The immediate electron acceptor for the enzyme is believed to be ubiquinone. This chain is NADH-ubiquinone oxidoreductase chain 4 (MT-ND4), found in Salmo salar (Atlantic salmon).